The sequence spans 596 residues: Elongation factor 4 (596 aa).

The tr-type G domain occupies 2 to 184 (KHIRNFSIIA…EIIAKIPPPV (183 aa)). GTP is bound by residues 14-19 (DHGKST) and 131-134 (NKID).

Belongs to the TRAFAC class translation factor GTPase superfamily. Classic translation factor GTPase family. LepA subfamily.

It localises to the cell inner membrane. The enzyme catalyses GTP + H2O = GDP + phosphate + H(+). Functionally, required for accurate and efficient protein synthesis under certain stress conditions. May act as a fidelity factor of the translation reaction, by catalyzing a one-codon backward translocation of tRNAs on improperly translocated ribosomes. Back-translocation proceeds from a post-translocation (POST) complex to a pre-translocation (PRE) complex, thus giving elongation factor G a second chance to translocate the tRNAs correctly. Binds to ribosomes in a GTP-dependent manner. This is Elongation factor 4 from Shewanella frigidimarina (strain NCIMB 400).